The chain runs to 139 residues: uncharacterized protein (139 aa).

This sequence to E.coli YecT.

This is an uncharacterized protein from Rhizobium meliloti (strain 1021) (Ensifer meliloti).